Reading from the N-terminus, the 880-residue chain is Leucine--tRNA ligase (880 aa).

The 'HIGH' region signature appears at 49–59; it reads PYPSGRIHMGH. The 'KMSKS' region motif lies at 638–642; that stretch reads KMSKS. An ATP-binding site is contributed by K641.

Belongs to the class-I aminoacyl-tRNA synthetase family.

It is found in the cytoplasm. It carries out the reaction tRNA(Leu) + L-leucine + ATP = L-leucyl-tRNA(Leu) + AMP + diphosphate. The protein is Leucine--tRNA ligase of Bartonella quintana (strain Toulouse) (Rochalimaea quintana).